Consider the following 353-residue polypeptide: Phosphoribosylformylglycinamidine cyclo-ligase (353 aa).

The protein belongs to the AIR synthase family.

The protein resides in the cytoplasm. The catalysed reaction is 2-formamido-N(1)-(5-O-phospho-beta-D-ribosyl)acetamidine + ATP = 5-amino-1-(5-phospho-beta-D-ribosyl)imidazole + ADP + phosphate + H(+). It participates in purine metabolism; IMP biosynthesis via de novo pathway; 5-amino-1-(5-phospho-D-ribosyl)imidazole from N(2)-formyl-N(1)-(5-phospho-D-ribosyl)glycinamide: step 2/2. This is Phosphoribosylformylglycinamidine cyclo-ligase from Symbiobacterium thermophilum (strain DSM 24528 / JCM 14929 / IAM 14863 / T).